A 452-amino-acid polypeptide reads, in one-letter code: NADH-ubiquinone oxidoreductase chain 4 (452 aa).

14 helical membrane passes run 7–27 (VLMS…IIAL), 57–77 (MMSF…ILAS), 95–115 (VILL…MFYI), 116–136 (WFEA…YQPE), 145–165 (MIYT…IFIV), 186–206 (MALA…MFTV), 218–238 (PIAG…YGIL), 251–271 (TSSL…LICL), 278–298 (SLIA…ALMS), 303–323 (FQAA…LFVM), 336–356 (LFLM…WFLF), 360–380 (NMAA…TSIL), 386–406 (AFIL…YMYT), and 428–448 (LTLM…PELI).

Belongs to the complex I subunit 4 family.

It is found in the mitochondrion membrane. It catalyses the reaction a ubiquinone + NADH + 5 H(+)(in) = a ubiquinol + NAD(+) + 4 H(+)(out). Functionally, core subunit of the mitochondrial membrane respiratory chain NADH dehydrogenase (Complex I) that is believed to belong to the minimal assembly required for catalysis. Complex I functions in the transfer of electrons from NADH to the respiratory chain. The immediate electron acceptor for the enzyme is believed to be ubiquinone. This Lumbricus terrestris (Common earthworm) protein is NADH-ubiquinone oxidoreductase chain 4 (ND4).